A 2090-amino-acid polypeptide reads, in one-letter code: Non-reducing polyketide synthase rdc1 (2090 aa).

The tract at residues 12 to 250 is N-terminal acylcarrier protein transacylase (SAT) domain; sequence FLVGDQVDSW…NPLNIHALQH (239 aa). The 434-residue stretch at 375-808 folds into the Ketosynthase family 3 (KS3) domain; the sequence is TGRIAIVGMS…GGNACLLLED (434 aa). Catalysis depends on for beta-ketoacyl synthase activity residues Cys551, His686, and His726. The segment at 912–1195 is malonyl-CoA:ACP transacylase (MAT) domain; it reads IFVFSGQGSH…NQVCTQFVRA (284 aa). Ser1003 (for acyl/malonyl transferase activity) is an active-site residue. Positions 1293-1433 are N-terminal hotdog fold; sequence QHVAKESSSN…LVVQKNVKAL (141 aa). A PKS/mFAS DH domain is found at 1293 to 1607; the sequence is QHVAKESSSN…FVRISNALLQ (315 aa). The segment at 1304-1604 is product template (PT) domain; the sequence is GKLEITFRAS…NLSFVRISNA (301 aa). The C-terminal hotdog fold stretch occupies residues 1459–1607; it reads QGHWLKHDIF…FVRISNALLQ (149 aa). A disordered region spans residues 1615–1650; it reads SKPVGRGMAKQEKQEVPATTEVVRQPEKEESRHSVD. Basic and acidic residues predominate over residues 1638-1649; sequence RQPEKEESRHSV. The Carrier domain maps to 1649–1726; sequence VDTPSFSDVL…DIKRAFDILT (78 aa). Position 1686 is an O-(pantetheine 4'-phosphoryl)serine (Ser1686). The interval 1820-1964 is thioesterase (TE) domain; sequence ADGTGSIATY…THQHLKALFA (145 aa).

It participates in secondary metabolite biosynthesis. Its function is as follows. Non-reducing polyketide synthase; part of the gene cluster that mediates the biosynthesis of radicicol, a resorcylic acid lactone (RAL) that irreversibly inhibits the HSP90 molecular chaperone, an important target for cancer chemotherapy. The radicicol cluster encodes only two apparent post-PKS enzymes, a cytochrome P450 monooxygenase (rdc4) and a non-heme halogenase (rdc2) that could introduce the epoxide and the chlorine, respectively. If this cluster includes all the genes required for radicicol biosynthesis, the remaining structural features of radicicol are presumably generated by the PKSs rdc1 and rdc5. The C-2' ketone could arise if the R-PKS rdc5 and NR-PKS rdc1 each carry out four iterations, in contrast to the five iteration-three iteration split for the hypothemycin PKSs. The origin of the cis 5',6' double bond is not known. The radicicol R-PKS rdc5 ER domain may catalyze either double bond isomerization or reduction in the third iteration. In Metacordyceps chlamydosporia (Nematophagous fungus), this protein is Non-reducing polyketide synthase rdc1.